A 95-amino-acid polypeptide reads, in one-letter code: Co-chaperonin GroES (95 aa).

It belongs to the GroES chaperonin family. In terms of assembly, heptamer of 7 subunits arranged in a ring. Interacts with the chaperonin GroEL.

The protein resides in the cytoplasm. In terms of biological role, together with the chaperonin GroEL, plays an essential role in assisting protein folding. The GroEL-GroES system forms a nano-cage that allows encapsulation of the non-native substrate proteins and provides a physical environment optimized to promote and accelerate protein folding. GroES binds to the apical surface of the GroEL ring, thereby capping the opening of the GroEL channel. In Clostridium acetobutylicum (strain ATCC 824 / DSM 792 / JCM 1419 / IAM 19013 / LMG 5710 / NBRC 13948 / NRRL B-527 / VKM B-1787 / 2291 / W), this protein is Co-chaperonin GroES.